The primary structure comprises 317 residues: L-lactate dehydrogenase (317 aa).

Residues Val-17, Asp-38, Lys-43, Tyr-69, and 83-84 each bind NAD(+); that span reads GA. Residues Gln-86 and Arg-92 each contribute to the substrate site. NAD(+) is bound by residues Ser-105, 122-124, and Ser-147; that span reads ATN. Residue 124-127 participates in substrate binding; the sequence is NPVD. 152–155 contacts substrate; the sequence is DTAR. Residues Arg-157 and His-172 each coordinate beta-D-fructose 1,6-bisphosphate. The Proton acceptor role is filled by His-179. At Tyr-224 the chain carries Phosphotyrosine. Thr-233 contacts substrate.

This sequence belongs to the LDH/MDH superfamily. LDH family. Homotetramer.

It localises to the cytoplasm. It carries out the reaction (S)-lactate + NAD(+) = pyruvate + NADH + H(+). The protein operates within fermentation; pyruvate fermentation to lactate; (S)-lactate from pyruvate: step 1/1. Allosterically activated by fructose 1,6-bisphosphate (FBP). Its function is as follows. Catalyzes the conversion of lactate to pyruvate. This Bacillus caldolyticus protein is L-lactate dehydrogenase.